Here is a 633-residue protein sequence, read N- to C-terminus: Acetylcholinesterase (633 aa).

A signal peptide spans 1-23 (MKILDALLFPVIFIMFFIHLSIA). Cys-91 and Cys-118 are oxidised to a cystine. N-linked (GlcNAc...) asparagine glycans are attached at residues Asn-133 and Asn-184. Ser-225 serves as the catalytic Acyl-ester intermediate. A disulfide bond links Cys-279 and Cys-290. N-linked (GlcNAc...) asparagine glycosylation is present at Asn-283. Residue Glu-352 is the Charge relay system of the active site. Asn-368 is a glycosylation site (N-linked (GlcNAc...) asparagine). Cys-427 and Cys-579 are oxidised to a cystine. His-494 functions as the Charge relay system in the catalytic mechanism. N-linked (GlcNAc...) asparagine glycans are attached at residues Asn-511 and Asn-591.

Belongs to the type-B carboxylesterase/lipase family.

It is found in the synapse. It localises to the secreted. Its subcellular location is the cell membrane. It carries out the reaction acetylcholine + H2O = choline + acetate + H(+). Terminates signal transduction at the neuromuscular junction by rapid hydrolysis of the acetylcholine released into the synaptic cleft. This chain is Acetylcholinesterase (ache), found in Electrophorus electricus (Electric eel).